The following is a 189-amino-acid chain: Early E3 20.5 kDa glycoprotein (189 aa).

2 N-linked (GlcNAc...) asparagine; by host glycosylation sites follow: Asn73 and Asn137.

This sequence belongs to the adenoviridae E3_20 family.

Its function is as follows. E3 proteins seem to be dispensable for virus growth in tissue culture cells. They are potentially important for virus growth under special conditions; E3 region may help adenoviruses to evade the immune surveillance of the host. The protein is Early E3 20.5 kDa glycoprotein of Human adenovirus B serotype 3 (HAdV-3).